We begin with the raw amino-acid sequence, 290 residues long: MFHGSMVAMVTPMHPDGAVDEVSLARLVDYHVEHGTDAIVAVGTTGESATLDYDEHCHVMRKVVEAARGRIPVIGGTGANSTWEAIKLTRCAMEGGCDATLLVVPYYNKPTQDGLYRHFAAIADAVAIPQILYNVPGRTACDLLPDTVDRLADISNIVGIKEASTIERVHDLVERCSDRLDVFSGEDGLSREAVLAGAKGVISVTANVAPQQMHDMVAAALRGDEEEASRIDARLAALHSALFLESNPIPVKWAVSQMGLCGPSIRLPLTELSEQHHETVRQAMKLAGSL.

Residue Thr45 participates in pyruvate binding. The Proton donor/acceptor role is filled by Tyr133. Lys161 functions as the Schiff-base intermediate with substrate in the catalytic mechanism. Ile202 is a binding site for pyruvate.

It belongs to the DapA family. In terms of assembly, homotetramer; dimer of dimers.

The protein resides in the cytoplasm. The enzyme catalyses L-aspartate 4-semialdehyde + pyruvate = (2S,4S)-4-hydroxy-2,3,4,5-tetrahydrodipicolinate + H2O + H(+). It functions in the pathway amino-acid biosynthesis; L-lysine biosynthesis via DAP pathway; (S)-tetrahydrodipicolinate from L-aspartate: step 3/4. Functionally, catalyzes the condensation of (S)-aspartate-beta-semialdehyde [(S)-ASA] and pyruvate to 4-hydroxy-tetrahydrodipicolinate (HTPA). In Alkalilimnicola ehrlichii (strain ATCC BAA-1101 / DSM 17681 / MLHE-1), this protein is 4-hydroxy-tetrahydrodipicolinate synthase.